We begin with the raw amino-acid sequence, 262 residues long: Large ribosomal subunit protein uL5c (262 aa).

A chloroplast-targeting transit peptide spans 1-39 (MASPSLLQSSASSFHGRFSPLAAPSSARMLSPPLRNVVK).

It belongs to the universal ribosomal protein uL5 family. As to quaternary structure, part of the 50S ribosomal subunit; contacts the 5S rRNA.

Its subcellular location is the plastid. It localises to the chloroplast. In terms of biological role, binds 5S rRNA, forms part of the central protuberance of the 50S subunit. This chain is Large ribosomal subunit protein uL5c (RPL5), found in Arabidopsis thaliana (Mouse-ear cress).